A 229-amino-acid polypeptide reads, in one-letter code: Urease accessory protein UreF (229 aa).

It belongs to the UreF family. UreD, UreF and UreG form a complex that acts as a GTP-hydrolysis-dependent molecular chaperone, activating the urease apoprotein by helping to assemble the nickel containing metallocenter of UreC. The UreE protein probably delivers the nickel.

It localises to the cytoplasm. Its function is as follows. Required for maturation of urease via the functional incorporation of the urease nickel metallocenter. This is Urease accessory protein UreF from Staphylococcus epidermidis (strain ATCC 12228 / FDA PCI 1200).